A 126-amino-acid polypeptide reads, in one-letter code: DNA-directed RNA polymerase I subunit RPA12 (126 aa).

Zn(2+) is bound by residues cysteine 20, cysteine 23, cysteine 38, cysteine 41, cysteine 87, and cysteine 90. Residues cysteine 20 to cysteine 41 form a C4-type zinc finger. A TFIIS-type zinc finger spans residues valine 83–lysine 123. Residues aspartate 106–glutamate 107 carry the Hairpin motif. The Zn(2+) site is built by cysteine 115 and cysteine 118.

This sequence belongs to the archaeal RpoM/eukaryotic RPA12/RPB9/RPC11 RNA polymerase family. As to quaternary structure, component of the RNA polymerase I (Pol I) complex consisting of 13 subunits: a ten-subunit catalytic core composed of POLR1A/RPA1, POLR1B/RPA2, POLR1C/RPAC1, POLR1D/RPAC2, POLR1H/RPA12, POLR2E/RPABC1, POLR2F/RPABC2, POLR2H/RPABC3, POLR2K/RPABC4 and POLR2L/RPABC5; a mobile stalk subunit POLR1F/RPA43 protruding from the core and additional subunits homologous to general transcription factors POLR1E/RPA49 and POLR1G/RPA34. Part of Pol I pre-initiation complex (PIC), in which Pol I core assembles with RRN3 and promoter-bound UTBF and SL1/TIF-IB complex.

The protein resides in the nucleus. Its subcellular location is the nucleolus. Its function is as follows. Core component of RNA polymerase I (Pol I), a DNA-dependent RNA polymerase which synthesizes ribosomal RNA precursors using the four ribonucleoside triphosphates as substrates. Can mediate Pol I proofreading of the nascent RNA transcript. Anchors into the Pol I active site to monitor transcription fidelity and cleave mis-incorporated 5'-ribonucleotides. This Macaca mulatta (Rhesus macaque) protein is DNA-directed RNA polymerase I subunit RPA12.